We begin with the raw amino-acid sequence, 390 residues long: GTP 3',8-cyclase, mitochondrial (390 aa).

A mitochondrion-targeting transit peptide spans 1-45 (MRRCFSKITDCHLGFKNSNFLLVGSEVGSGSVTRTITTTTSERLF). One can recognise a Radical SAM core domain in the interval 69–290 (KFGRLHTYLR…PSIKRMQDHP (222 aa)). Position 78 (Arg-78) interacts with GTP. Residues Cys-85 and Cys-89 each coordinate [4Fe-4S] cluster. Residue Tyr-91 participates in S-adenosyl-L-methionine binding. Cys-92 lines the [4Fe-4S] cluster pocket. Arg-128 contributes to the GTP binding site. An S-adenosyl-L-methionine-binding site is contributed by Gly-132. Thr-159 is a GTP binding site. Position 183 (Ser-183) interacts with S-adenosyl-L-methionine. Lys-220 is a binding site for GTP. Met-254 lines the S-adenosyl-L-methionine pocket. Residues Cys-317 and Cys-320 each coordinate [4Fe-4S] cluster. 322 to 324 (RLR) lines the GTP pocket. Cys-334 serves as a coordination point for [4Fe-4S] cluster.

It belongs to the radical SAM superfamily. MoaA family. In terms of assembly, homodimer. Requires [4Fe-4S] cluster as cofactor. Expressed in all organs, with an abundant expression in the roots.

The protein resides in the mitochondrion matrix. The catalysed reaction is GTP + AH2 + S-adenosyl-L-methionine = (8S)-3',8-cyclo-7,8-dihydroguanosine 5'-triphosphate + 5'-deoxyadenosine + L-methionine + A + H(+). The protein operates within cofactor biosynthesis; molybdopterin biosynthesis. Its function is as follows. Catalyzes the cyclization of GTP to (8S)-3',8-cyclo-7,8-dihydroguanosine 5'-triphosphate. The protein is GTP 3',8-cyclase, mitochondrial (CNX2) of Arabidopsis thaliana (Mouse-ear cress).